The primary structure comprises 536 residues: DEAD-box ATP-dependent RNA helicase 41 (536 aa).

A compositionally biased stretch (basic and acidic residues) spans 1 to 10 (MEQEENHSAD). Residues 1–25 (MEQEENHSADHLSAQPGNGNELEES) form a disordered region. Residues 40–69 (GEPRCVICGRYGEYICDQTDDDICSVECKT) form an HIT-type zinc finger. The Q motif motif lies at 137 to 165 (MCFSSSGLPEKLVLNLEAAGYVMPTPVQM). The Helicase ATP-binding domain occupies 168–344 (IPSSICNRSL…NSLAKNAIHI (177 aa)). Residue 181 to 188 (ADTGSGKT) coordinates ATP. The DEAD box signature appears at 293 to 296 (DEVD). Residues 355-518 (SVKQVVIWVE…PIPRELANSK (164 aa)) enclose the Helicase C-terminal domain.

The protein belongs to the DEAD box helicase family. DDX59 subfamily.

The enzyme catalyses ATP + H2O = ADP + phosphate + H(+). The chain is DEAD-box ATP-dependent RNA helicase 41 from Oryza sativa subsp. japonica (Rice).